Here is a 347-residue protein sequence, read N- to C-terminus: Oocyte-specific homeobox protein 6 (347 aa).

2 disordered regions span residues 1-20 (MLQY…HSKF) and 54-86 (PRSP…IQMQ). The span at 72-85 (QESQGPSGKSSIQM) shows a compositional bias: polar residues. Positions 145 to 204 (HRKIRTVYTEEQKCVLKKHFHKCTYPSREQRMALAVLVGVTANEIQIWFKNHRAKSKRES) form a DNA-binding region, homeobox.

It belongs to the paired homeobox family. Obox subfamily. As to expression, specifically expressed in early embryos.

The protein resides in the nucleus. Transcription factor required for zygotic genome activation (ZGA), a critical event in early embryonic development during which the developmental control passes from maternally provided mRNAs to the expression of the zygotic genome after fertilization. This Mus musculus (Mouse) protein is Oocyte-specific homeobox protein 6.